A 330-amino-acid polypeptide reads, in one-letter code: Molybdate/tungstate import ATP-binding protein WtpC (330 aa).

Residues Leu-3 to Leu-232 enclose the ABC transporter domain. Gly-34–Thr-41 provides a ligand contact to ATP.

The protein belongs to the ABC transporter superfamily. Sulfate/tungstate importer (TC 3.A.1.6) family. In terms of assembly, the complex is composed of two ATP-binding proteins (WtpC), two transmembrane proteins (WtpB) and a solute-binding protein (WtpA).

The protein resides in the cell membrane. It catalyses the reaction tungstate(in) + ATP + H2O = tungstate(out) + ADP + phosphate + H(+). Part of the ABC transporter complex WtpABC involved in molybdate/tungstate import. Responsible for energy coupling to the transport system. The protein is Molybdate/tungstate import ATP-binding protein WtpC (wtpC) of Thermococcus kodakarensis (strain ATCC BAA-918 / JCM 12380 / KOD1) (Pyrococcus kodakaraensis (strain KOD1)).